The chain runs to 383 residues: L-lactate dehydrogenase (383 aa).

Residues 1–380 (MIISSGNDYR…NADCLVQAIK (380 aa)) enclose the FMN hydroxy acid dehydrogenase domain. A substrate-binding site is contributed by tyrosine 24. The FMN site is built by serine 106 and glutamine 127. Position 129 (tyrosine 129) interacts with substrate. Threonine 155 serves as a coordination point for FMN. Substrate is bound at residue arginine 164. FMN is bound at residue lysine 251. Histidine 275 acts as the Proton acceptor in catalysis. A substrate-binding site is contributed by arginine 278. An FMN-binding site is contributed by 306 to 330 (DSGIRNGLDVVRMLALGADTVLLGR).

This sequence belongs to the FMN-dependent alpha-hydroxy acid dehydrogenase family. It depends on FMN as a cofactor.

The protein localises to the cell inner membrane. It catalyses the reaction (S)-lactate + A = pyruvate + AH2. In terms of biological role, catalyzes the conversion of L-lactate to pyruvate. Is coupled to the respiratory chain. The polypeptide is L-lactate dehydrogenase (Acinetobacter baumannii (strain AB307-0294)).